Consider the following 320-residue polypeptide: MDVFLKLLQKDGNIVYSPVSISLSIDMIISKKGYIHRPLSPYTNYNEDTISIASRIYGDCNSLNKDPCICMDCIGDMFVLVDFDKNHKDIIDDINKWVSERTNNHIDTIIDNIGDNTKLLIVNAAYFKSSWEDEFIKEYTSIEKFWYNSTEFILVPMMSNKDIYSYGYIKDSDIKIIEIPYKDRRFSMFIPITKVYKTLCNIITIDKLAMWTSTMNLYEVDIKIPRFKVESSYELKDIIGCINMEYYIREGTELNTPSGFRHKSVIEVNEDGTTASASTCCCVADSVSNKEFYAYSPFIFYIKDNTTSDFLFVGKIISPM.

The protein belongs to the serpin family. Poxviruses subfamily.

This Swinepox virus (strain Kasza) (SWPV) protein is Probable serine proteinase inhibitor 1 (SPI-1).